Consider the following 485-residue polypeptide: NADH-quinone oxidoreductase subunit N (485 aa).

14 helical membrane passes run 8 to 28 (LIAL…MLSI), 35 to 55 (FLNA…LWFV), 71 to 91 (GFAM…CTFA), 105 to 125 (FYLL…ANHL), 127 to 147 (ALFL…GYAF), 159 to 179 (YTIL…LVYA), 203 to 223 (LLAG…LVPF), 235 to 255 (PAPV…GVVM), 271 to 291 (VVLG…ALSQ), 297 to 317 (LLGY…IALQ), 326 to 346 (VGVY…VVSL), 373 to 393 (AAVM…LGFI), 408 to 430 (WWLV…RVAV), and 455 to 475 (IVVL…QPLI).

The protein belongs to the complex I subunit 2 family. In terms of assembly, NDH-1 is composed of 13 different subunits. Subunits NuoA, H, J, K, L, M, N constitute the membrane sector of the complex.

It is found in the cell inner membrane. The enzyme catalyses a quinone + NADH + 5 H(+)(in) = a quinol + NAD(+) + 4 H(+)(out). Its function is as follows. NDH-1 shuttles electrons from NADH, via FMN and iron-sulfur (Fe-S) centers, to quinones in the respiratory chain. The immediate electron acceptor for the enzyme in this species is believed to be ubiquinone. Couples the redox reaction to proton translocation (for every two electrons transferred, four hydrogen ions are translocated across the cytoplasmic membrane), and thus conserves the redox energy in a proton gradient. The polypeptide is NADH-quinone oxidoreductase subunit N (Salmonella dublin (strain CT_02021853)).